Reading from the N-terminus, the 493-residue chain is 3-octaprenyl-4-hydroxybenzoate carboxy-lyase (493 aa).

Residue asparagine 172 participates in Mn(2+) binding. Residues 175–177 (IYR), 189–191 (RWL), and 194–195 (RG) each bind prenylated FMN. Glutamate 238 is a binding site for Mn(2+). The Proton donor role is filled by aspartate 287.

This sequence belongs to the UbiD family. As to quaternary structure, homohexamer. The cofactor is prenylated FMN. Mn(2+) serves as cofactor.

The protein resides in the cell membrane. The enzyme catalyses a 4-hydroxy-3-(all-trans-polyprenyl)benzoate + H(+) = a 2-(all-trans-polyprenyl)phenol + CO2. It participates in cofactor biosynthesis; ubiquinone biosynthesis. In terms of biological role, catalyzes the decarboxylation of 3-octaprenyl-4-hydroxy benzoate to 2-octaprenylphenol, an intermediate step in ubiquinone biosynthesis. The protein is 3-octaprenyl-4-hydroxybenzoate carboxy-lyase of Shewanella baltica (strain OS155 / ATCC BAA-1091).